A 147-amino-acid polypeptide reads, in one-letter code: Putative pre-16S rRNA nuclease (147 aa).

It belongs to the YqgF nuclease family.

It is found in the cytoplasm. In terms of biological role, could be a nuclease involved in processing of the 5'-end of pre-16S rRNA. This Ureaplasma parvum serovar 3 (strain ATCC 27815 / 27 / NCTC 11736) protein is Putative pre-16S rRNA nuclease.